Consider the following 102-residue polypeptide: Small ribosomal subunit protein uS10 (102 aa).

The protein belongs to the universal ribosomal protein uS10 family. In terms of assembly, part of the 30S ribosomal subunit.

Its function is as follows. Involved in the binding of tRNA to the ribosomes. In Roseiflexus sp. (strain RS-1), this protein is Small ribosomal subunit protein uS10.